Consider the following 258-residue polypeptide: 6-phosphogluconolactonase (258 aa).

At Ala-2 the chain carries N-acetylalanine. Residue Ser-49 is modified to Phosphoserine. Lys-180 bears the N6-acetyllysine mark.

This sequence belongs to the glucosamine/galactosamine-6-phosphate isomerase family. 6-phosphogluconolactonase subfamily.

The protein resides in the cytoplasm. It catalyses the reaction 6-phospho-D-glucono-1,5-lactone + H2O = 6-phospho-D-gluconate + H(+). Its pathway is carbohydrate degradation; pentose phosphate pathway; D-ribulose 5-phosphate from D-glucose 6-phosphate (oxidative stage): step 2/3. Hydrolysis of 6-phosphogluconolactone to 6-phosphogluconate. The chain is 6-phosphogluconolactonase (PGLS) from Bos taurus (Bovine).